A 489-amino-acid chain; its full sequence is Glycogen synthase (489 aa).

Residue Arg20 participates in ADP-alpha-D-glucose binding.

Belongs to the glycosyltransferase 1 family. Bacterial/plant glycogen synthase subfamily.

The catalysed reaction is [(1-&gt;4)-alpha-D-glucosyl](n) + ADP-alpha-D-glucose = [(1-&gt;4)-alpha-D-glucosyl](n+1) + ADP + H(+). It functions in the pathway glycan biosynthesis; glycogen biosynthesis. Its function is as follows. Synthesizes alpha-1,4-glucan chains using ADP-glucose. This is Glycogen synthase from Chlorobium luteolum (strain DSM 273 / BCRC 81028 / 2530) (Pelodictyon luteolum).